Here is a 134-residue protein sequence, read N- to C-terminus: Ribosome-binding factor A (134 aa).

This sequence belongs to the RbfA family. As to quaternary structure, monomer. Binds 30S ribosomal subunits, but not 50S ribosomal subunits or 70S ribosomes.

The protein resides in the cytoplasm. One of several proteins that assist in the late maturation steps of the functional core of the 30S ribosomal subunit. Associates with free 30S ribosomal subunits (but not with 30S subunits that are part of 70S ribosomes or polysomes). Required for efficient processing of 16S rRNA. May interact with the 5'-terminal helix region of 16S rRNA. The polypeptide is Ribosome-binding factor A (Cyanothece sp. (strain PCC 7425 / ATCC 29141)).